The following is a 245-amino-acid chain: Adenylate kinase (245 aa).

15-20 serves as a coordination point for ATP; that stretch reads GSGKGT. The segment at 35–64 is NMP; it reads SSGDLLRDAVSKDTPLSQEIKSYLDQGKLL. AMP-binding positions include Ser36, Arg41, 62 to 64, 103 to 106, and Gln110; these read KLL and GFPR. The segment at 143–176 is LID; that stretch reads SRYICPACQGIYNEQQGFSSCPKCSVELIRRSDD. Arg144 contacts ATP. Zn(2+) is bound by residues Cys147 and Cys150. 153 to 154 provides a ligand contact to ATP; that stretch reads IY. The Zn(2+) site is built by Cys163 and Cys166. AMP-binding residues include Arg173 and Arg184. Residue Ala212 participates in ATP binding.

The protein belongs to the adenylate kinase family. As to quaternary structure, monomer.

The protein localises to the cytoplasm. It carries out the reaction AMP + ATP = 2 ADP. Its pathway is purine metabolism; AMP biosynthesis via salvage pathway; AMP from ADP: step 1/1. Its function is as follows. Catalyzes the reversible transfer of the terminal phosphate group between ATP and AMP. Plays an important role in cellular energy homeostasis and in adenine nucleotide metabolism. The sequence is that of Adenylate kinase from Chlamydia trachomatis serovar A (strain ATCC VR-571B / DSM 19440 / HAR-13).